The primary structure comprises 1085 residues: MSYAELQVTTHFSFLRGASSAQELFETAKALGIQAIGVVDRNSLAGIVRALEASRATDIRLVVGCRLDLTDGMSLLVYPTDRAAYSRLTRLITLGKSRGGKNNCILHWDDVIAYSRGMIGVLVPDLPDATCAAQLRRIAEAFGDRAYVSLCLRRRQNDQMRLHEISNLAARFKVKTVVTNDVLFHEPGRRQLQDIVTCIRHNTTIDDVGFERERHADRYLKPPEEMERLFSRYSEALARTLEIVRRCKFSLEELTYQYPEEAIVPGKDAQASLEHYVWECAPDRYPEGLPQDVLKTVRHELDLIRTMKYAPYFLTVFSIVRFARSQGILCQGRGSAANSAVCYILGITSIDPSTNDLLFERFVSQERDEPPDIDVDFEHERREEVIQWIYKTYTKDKAALCATVTRYRAKGAIRDVGKALGLPEDVIKALSSGMWSWSEEVPDRNIRELNLNPDDRRLALTLKLAQQLMGAPRHLGQHPGGFVLTHDRLDDLVPIEPATMKDRQIIEWDKDDVEALKFMKVDVLALGMLTCMAKAFDLIREHKGQQLDLSNIEQEDAATYAMIRKADTLGTFQIESRAQMAMLPRLKPRTFYDLVVQVAIVRPGPIQGDMVHPYLRRREGKEPVEYPTPELEAVLGKTLGVPLFQESAMRVAMVCAGFTGGEADQLRKSMATFKFTGGVSRFKDKLVSGMVKNGYSPEFAEKTFSQLEGFGSYGFPESHAASFALIAYASNYIKCHYPDVFCAALLNSQPMGFYAPAQIVGDAIKHGVEVRPVCVNRSRWDCTLERIEGSDRHAVRLGFRQVKGLAVADAARIVAARMNNPFASVDDMWRRSSVPTEALVQLAEADAFLPSLKLERRDALWAIKALRDEPLPLFAAAAEREATAIAEQQEPEVALRQMTDGHNVIEDYSHTGLTLRQHPVAFLRRDLSARNIIPCAEAMNARDGRWVYTAGLVLVRQKPGSAKGVMFITIEDETGPANIVVWPSLFEKRRSVVLGSSMMAINGRIQREGEVVHLVAQQLFDLSADLVGLADRDTGFRLPAGRGDEFAHGGGGPDSRDRQKPVVPRDMFTPDLHIDTLKIKSRNFQ.

The interval 1040-1066 (AGRGDEFAHGGGGPDSRDRQKPVVPRD) is disordered.

The protein belongs to the DNA polymerase type-C family. DnaE2 subfamily.

The protein localises to the cytoplasm. The catalysed reaction is DNA(n) + a 2'-deoxyribonucleoside 5'-triphosphate = DNA(n+1) + diphosphate. Functionally, DNA polymerase involved in damage-induced mutagenesis and translesion synthesis (TLS). It is not the major replicative DNA polymerase. This is Error-prone DNA polymerase 2 from Agrobacterium fabrum (strain C58 / ATCC 33970) (Agrobacterium tumefaciens (strain C58)).